The chain runs to 328 residues: MNDNWYKKIIGARTIKTGLATFLTALFCLALNLNPIFAILTAIVTIEPTAKASLKKGYRRLPATIIGALFAVIFTFIFGDQSPFAYALSATFTIILCTKLNLHVGTTVATLTAMAMIPGIHEAYFFNFFSRLLTAIIGLVTAGLVNFIILPPKYYDQVESSINLTESKMYELFELRMRQLLLGKFTKGAPYRQLNQLIDLNQKVETLLSYQKDELSYHKHHDSEWIQLKALTTRAHTNRLFITHLSNLVYLPKDTIITFTNDEKLAILSIAQSINNIYSTGHFERKKQHASLLKMSVKGLDEFDSNQLKSHVIYEILLIYRILDHRFA.

4 helical membrane passes run 26-46 (LFCL…IVTI), 61-81 (LPAT…FGDQ), 84-104 (FAYA…NLHV), and 132-152 (LLTA…ILPP).

The protein belongs to the UPF0421 family.

It is found in the cell membrane. This chain is UPF0421 protein SSP0904, found in Staphylococcus saprophyticus subsp. saprophyticus (strain ATCC 15305 / DSM 20229 / NCIMB 8711 / NCTC 7292 / S-41).